A 382-amino-acid chain; its full sequence is Succinyl-diaminopimelate desuccinylase (382 aa).

H73 contacts Zn(2+). D75 is an active-site residue. D106 is a binding site for Zn(2+). E140 serves as the catalytic Proton acceptor. The Zn(2+) site is built by E141, E169, and H355.

Belongs to the peptidase M20A family. DapE subfamily. As to quaternary structure, homodimer. Zn(2+) is required as a cofactor. Requires Co(2+) as cofactor.

The catalysed reaction is N-succinyl-(2S,6S)-2,6-diaminopimelate + H2O = (2S,6S)-2,6-diaminopimelate + succinate. It functions in the pathway amino-acid biosynthesis; L-lysine biosynthesis via DAP pathway; LL-2,6-diaminopimelate from (S)-tetrahydrodipicolinate (succinylase route): step 3/3. In terms of biological role, catalyzes the hydrolysis of N-succinyl-L,L-diaminopimelic acid (SDAP), forming succinate and LL-2,6-diaminopimelate (DAP), an intermediate involved in the bacterial biosynthesis of lysine and meso-diaminopimelic acid, an essential component of bacterial cell walls. The polypeptide is Succinyl-diaminopimelate desuccinylase (Saccharophagus degradans (strain 2-40 / ATCC 43961 / DSM 17024)).